The sequence spans 299 residues: Oxygen-dependent coproporphyrinogen-III oxidase (299 aa).

A substrate-binding site is contributed by Ser-92. Residues His-96 and His-106 each coordinate Mn(2+). His-106 functions as the Proton donor in the catalytic mechanism. Residue 108 to 110 (NVR) coordinates substrate. Mn(2+)-binding residues include His-145 and His-175. Residues 240-275 (YVEFNLVWDRGTLFGLQTGGRTESILMSMPPLVRWE) form an important for dimerization region. 258–260 (GGR) contacts substrate.

This sequence belongs to the aerobic coproporphyrinogen-III oxidase family. As to quaternary structure, homodimer. It depends on Mn(2+) as a cofactor.

It localises to the cytoplasm. It carries out the reaction coproporphyrinogen III + O2 + 2 H(+) = protoporphyrinogen IX + 2 CO2 + 2 H2O. It functions in the pathway porphyrin-containing compound metabolism; protoporphyrin-IX biosynthesis; protoporphyrinogen-IX from coproporphyrinogen-III (O2 route): step 1/1. Functionally, involved in the heme biosynthesis. Catalyzes the aerobic oxidative decarboxylation of propionate groups of rings A and B of coproporphyrinogen-III to yield the vinyl groups in protoporphyrinogen-IX. The chain is Oxygen-dependent coproporphyrinogen-III oxidase from Escherichia coli (strain SMS-3-5 / SECEC).